Consider the following 211-residue polypeptide: Nitrogen fixation regulation protein FixK (211 aa).

Positions 134–204 (QCAVERIAAF…ARTIDIMKPE (71 aa)) constitute an HTH crp-type domain. A DNA-binding region (H-T-H motif) is located at residues 163–182 (RQDIADYLGLTIETVSRVVT).

FixK is a protein that regulates nitrogen fixation genes both positively and negatively. FixK appears to repress its own expression and that of nifA. FixK may bind DNA at the FNR consensus binding site. This chain is Nitrogen fixation regulation protein FixK (fixK), found in Rhizobium meliloti (strain 1021) (Ensifer meliloti).